Reading from the N-terminus, the 219-residue chain is Proteasome subunit beta (219 aa).

A propeptide spans 1-14 (removed in mature form; by autocatalysis); sequence MISNSEYHKEYMKG. Residue Thr-15 is the Nucleophile of the active site.

The protein belongs to the peptidase T1B family. In terms of assembly, the 20S proteasome core is composed of 14 alpha and 14 beta subunits that assemble into four stacked heptameric rings, resulting in a barrel-shaped structure. The two inner rings, each composed of seven catalytic beta subunits, are sandwiched by two outer rings, each composed of seven alpha subunits. The catalytic chamber with the active sites is on the inside of the barrel. Has a gated structure, the ends of the cylinder being occluded by the N-termini of the alpha-subunits. Is capped at one or both ends by the proteasome regulatory ATPase, PAN.

Its subcellular location is the cytoplasm. The enzyme catalyses Cleavage of peptide bonds with very broad specificity.. With respect to regulation, the formation of the proteasomal ATPase PAN-20S proteasome complex, via the docking of the C-termini of PAN into the intersubunit pockets in the alpha-rings, triggers opening of the gate for substrate entry. Interconversion between the open-gate and close-gate conformations leads to a dynamic regulation of the 20S proteasome proteolysis activity. In terms of biological role, component of the proteasome core, a large protease complex with broad specificity involved in protein degradation. This is Proteasome subunit beta from Methanococcus maripaludis (strain C6 / ATCC BAA-1332).